Reading from the N-terminus, the 227-residue chain is Nitrobenzene nitroreductase (227 aa).

Residue 14 to 18 participates in FMN binding; sequence RRAKR. NADP(+) is bound by residues serine 44 and isoleucine 109. Residues 172-173 and lysine 215 each bind FMN; that span reads VF.

It belongs to the nitroreductase family. Monomer. FMN serves as cofactor.

It catalyses the reaction N-phenylhydroxylamine + 2 NADP(+) + H2O = nitrobenzene + 2 NADPH + 2 H(+). It participates in xenobiotic degradation; nitrobenzene degradation. With respect to regulation, inhibited by dicumarol, p-hydroxymercuribenzoate and salicyl hydroxamate. In terms of biological role, involved in the biodegradation of nitroaromatic compounds. Catalyzes the two-electron reduction of nitrobenzene (NB) to produce a nitrosobenzene (NOB) intermediate, which is immediately reduced to hydroxylaminobenzene (HAB) by a second two-electron transfer. Also active on menadione and nitrofurazone. Replacing NADPH with NADH results in a 4-fold decrease in the reaction rate. This is Nitrobenzene nitroreductase from Ectopseudomonas oleovorans (Pseudomonas oleovorans).